The following is a 186-amino-acid chain: Peptide deformylase (186 aa).

Fe cation contacts are provided by C99 and H141. The active site involves E142. A Fe cation-binding site is contributed by H145.

It belongs to the polypeptide deformylase family. The cofactor is Fe(2+).

The catalysed reaction is N-terminal N-formyl-L-methionyl-[peptide] + H2O = N-terminal L-methionyl-[peptide] + formate. Functionally, removes the formyl group from the N-terminal Met of newly synthesized proteins. Requires at least a dipeptide for an efficient rate of reaction. N-terminal L-methionine is a prerequisite for activity but the enzyme has broad specificity at other positions. In Chlamydia felis (strain Fe/C-56) (Chlamydophila felis), this protein is Peptide deformylase.